Consider the following 271-residue polypeptide: Neurexophilin-1 (271 aa).

Residues 1 to 21 (MQAACWYVLLLLQPTVYLVTC) form the signal peptide. An II region spans residues 22–97 (ANLTNGGKSE…WDWLRNSTDL (76 aa)). Residues Asn-23, Asn-68, Asn-93, Asn-146, Asn-156, and Asn-162 are each glycosylated (N-linked (GlcNAc...) asparagine). The segment at 98–176 (QEPRPRAKRR…LVPPTKIVEF (79 aa)) is III. Residues 177 to 185 (DLAQQTVID) form an IV (linker domain) region. The interval 186–271 (AKDSKSFNCR…HSDTPYFPSG (86 aa)) is v (Cys-rich).

The protein belongs to the neurexophilin family. May be proteolytically processed at the boundary between the N-terminal non-conserved and the central conserved domain in neuron-like cells. As to expression, highest level in brain.

The protein resides in the secreted. May be signaling molecules that resemble neuropeptides. Ligand for alpha-neurexins. This is Neurexophilin-1 (Nxph1) from Rattus norvegicus (Rat).